A 164-amino-acid polypeptide reads, in one-letter code: Interleukin-36 beta (164 aa).

A propeptide spanning residues 1-4 (MNPQ) is cleaved from the precursor.

Belongs to the IL-1 family. In terms of assembly, interacts with cargo receptor TMED10; the interaction mediates the translocation from the cytoplasm into the ERGIC (endoplasmic reticulum-Golgi intermediate compartment) and thereby secretion. N-terminal truncation leads to a dramatic enhancement of its activity (&gt;1000-fold). As to expression, expression at low levels in tonsil, bone marrow, heart, placenta, lung, testis and colon but not in any hematopoietic cell lines. Not detected in adipose tissue. Expressed at higher levels in psoriatic plaques than in symptomless psoriatic skin or healthy control skin. Increased levels are not detected in inflamed joint tissue.

The protein localises to the cytoplasm. Its subcellular location is the secreted. Its function is as follows. Cytokine that binds to and signals through the IL1RL2/IL-36R receptor which in turn activates NF-kappa-B and MAPK signaling pathways in target cells linked to a pro-inflammatory response. Part of the IL-36 signaling system that is thought to be present in epithelial barriers and to take part in local inflammatory response; similar to the IL-1 system with which it shares the coreceptor IL1RAP. Stimulates production of interleukin-6 and interleukin-8 in synovial fibrobasts, articular chondrocytes and mature adipocytes. Induces expression of a number of antimicrobial peptides including beta-defensins 4 and 103 as well as a number of matrix metalloproteases. Seems to be involved in skin inflammatory response by acting on keratinocytes, dendritic cells and indirectly on T-cells to drive tissue infiltration, cell maturation and cell proliferation. In cultured keratinocytes induces the expression of macrophage, T-cell, and neutrophil chemokines, such as CCL3, CCL4, CCL5, CCL2, CCL17, CCL22, CL20, CCL5, CCL2, CCL17, CCL22, CXCL8, CCL20 and CXCL1, and the production of pro-inflammatory cytokines such as TNF-alpha, IL-8 and IL-6. This Homo sapiens (Human) protein is Interleukin-36 beta.